The chain runs to 264 residues: Short chain dehydrogenase CPUR_05429 (264 aa).

NADP(+) is bound by residues isoleucine 24, aspartate 70, asparagine 97, and arginine 130. Residues serine 146 and serine 147 each act as proton donor in the active site. The NADP(+) site is built by tyrosine 161, lysine 165, and threonine 196. The Proton acceptor role is filled by tyrosine 161. Residue lysine 165 is the Lowers pKa of active site Tyr of the active site.

It belongs to the short-chain dehydrogenases/reductases (SDR) family.

It functions in the pathway pigment biosynthesis. Functionally, short chain dehydrogenase; part of the ergochrome gene cluster responsible for the typical purple-black color of the ergot sclerotia. The ergochrome gene cluster produces several ergot pigments including the yellow ergochrome secalonic acid and its derivatives, as well as the red anthraquinones endocrocin and clavorubin. The pathway begins with the synthesis of atrochrysone thioester by the polyketide synthase (PKS) CPUR_05437. The atrochrysone carboxyl ACP thioesterase CPUR_05436 then breaks the thioester bond and releases the atrochrysone carboxylic acid from CPUR_05437. The atrochrysone carboxylic acid is then converted to atrochrysone which is further transformed into emodin anthrone. The next step is performed by the anthrone oxygenase CPUR_05434 that catalyzes the oxidation of emodinanthrone to emodin. Emodin is further modified to yield monodictyphenone via several steps involving CPUR_05427, CPUR_05428, CPUR_05429 and CPUR_05430. The short chain dehydrogenase/reductase CPUR_05418 then catalyzes the C-5 ketoreduction to give the xanthone skeleton of the monomeric units. Ergochromes formation requires further dimerization steps of different xanthone units, probably catalyzed by the cytochrome P450 monooxygenase CPUR_05419. CPUR_05425, CPUR_05426 and CPUR_05431 are unique to Claviceps, thus it is likely that they are involved in further modification of xanthone units or in their dimerization. The yellow ergochromes and the red anthraquinone pigments endocrocin and clavorubin are products from the same PKS derived precursors and the latter are likely shunt products in the pathway of xanthone biosynthesis. It is proposed that atrochrysone carboxylic acid released from the PKS CPUR_05437 can also be converted to endocrocin anthrone which is further oxidized into endocrocin by CPUR_05435. Endocrocin could be then modified to clavorubin, possibly by CPUR_05423 and CPUR_05431. Clavorubin is the principal anthraquinone metabolite produced by the cluster with a much higher yield compared to endocrocin. The chain is Short chain dehydrogenase CPUR_05429 from Claviceps purpurea (strain 20.1) (Ergot fungus).